We begin with the raw amino-acid sequence, 803 residues long: Ubiquitin carboxyl-terminal hydrolase 45 (803 aa).

The segment at 1–34 (MRLKDPFSLKTADMTKRSNKPKKPRDEDSSDEVG) is disordered. The UBP-type zinc finger occupies 36-153 (LTCQHVSRAV…QTLDFLQKQS (118 aa)). Positions 38, 40, 62, 65, 85, 88, 93, 100, 104, 113, 126, and 129 each coordinate Zn(2+). The USP domain maps to 192–802 (KGINNLGNTC…QAYLLFYEEL (611 aa)). The Nucleophile role is filled by Cys-201. A disordered region spans residues 394–554 (PTNPARLGKS…LPSIRPQQGG (161 aa)). The span at 403–417 (SGREQDSLTSHDDSL) shows a compositional bias: basic and acidic residues. Composition is skewed to polar residues over residues 419–440 (AHSQ…SRHS) and 469–480 (SYRTDTMGSQSD). Over residues 502 to 531 (SEWSPRIPSVSSHSSTSDKTSITTTLSTTT) the composition is skewed to low complexity. Residues 532–545 (HNPSLKSNPSSTPL) show a composition bias toward polar residues. His-739 functions as the Proton acceptor in the catalytic mechanism.

Belongs to the peptidase C19 family. Retina.

It localises to the photoreceptor inner segment. The protein localises to the cytoplasm. The protein resides in the nucleus. The catalysed reaction is Thiol-dependent hydrolysis of ester, thioester, amide, peptide and isopeptide bonds formed by the C-terminal Gly of ubiquitin (a 76-residue protein attached to proteins as an intracellular targeting signal).. In terms of biological role, catalyzes the deubiquitination of SPDL1. Plays a role in the repair of UV-induced DNA damage via deubiquitination of ERCC1, promoting its recruitment to DNA damage sites. May be involved in the maintenance of photoreceptor function. May play a role in normal retinal development. This is Ubiquitin carboxyl-terminal hydrolase 45 from Danio rerio (Zebrafish).